The chain runs to 200 residues: Cysteine dioxygenase type 1 (200 aa).

3 residues coordinate Fe cation: His-86, His-88, and His-140. The 3'-(S-cysteinyl)-tyrosine (Cys-Tyr) cross-link spans 93–157 (CFLKLLQGNL…TEPAVSLHLY (65 aa)).

Belongs to the cysteine dioxygenase family. Monomer. Fe(2+) is required as a cofactor. Requires Ni(2+) as cofactor. The cofactor is Zn(2+). In terms of processing, the thioether cross-link between Cys-93 and Tyr-157 plays a structural role through stabilizing the Fe(2+) ion, and prevents the production of highly damaging free hydroxyl radicals by holding the oxygen radical via hydroxyl hydrogen. As to expression, highest expression in liver. Also expressed in kidney, lung, brain and small intestine.

The enzyme catalyses L-cysteine + O2 = 3-sulfino-L-alanine + H(+). It participates in organosulfur biosynthesis; taurine biosynthesis; hypotaurine from L-cysteine: step 1/2. Catalyzes the oxidation of cysteine to cysteine sulfinic acid with addition of molecular dioxygen. The protein is Cysteine dioxygenase type 1 (Cdo1) of Mus musculus (Mouse).